A 468-amino-acid chain; its full sequence is Glutamate--tRNA ligase 2 (468 aa).

The 'HIGH' region motif lies at 9 to 19 (PSPTGFLHIGG). Residues 238-242 (KLSKR) carry the 'KMSKS' region motif. Lys-241 is an ATP binding site.

Belongs to the class-I aminoacyl-tRNA synthetase family. Glutamate--tRNA ligase type 1 subfamily. As to quaternary structure, monomer.

It is found in the cytoplasm. The enzyme catalyses tRNA(Glu) + L-glutamate + ATP = L-glutamyl-tRNA(Glu) + AMP + diphosphate. Its function is as follows. Catalyzes the attachment of glutamate to tRNA(Glu) in a two-step reaction: glutamate is first activated by ATP to form Glu-AMP and then transferred to the acceptor end of tRNA(Glu). This Rhodospirillum rubrum (strain ATCC 11170 / ATH 1.1.1 / DSM 467 / LMG 4362 / NCIMB 8255 / S1) protein is Glutamate--tRNA ligase 2.